A 459-amino-acid chain; its full sequence is XK-related protein 3 (459 aa).

A run of 10 helical transmembrane segments spans residues 35 to 55, 68 to 88, 97 to 117, 169 to 189, 199 to 219, 238 to 258, 264 to 284, 300 to 320, 345 to 365, and 377 to 397; these read FSII…LYMF, SFTI…LMFF, AALL…LHTI, IQAF…SLTI, LMTF…ILAI, VVMW…FFIA, SLPV…LEFW, MVGT…INFS, ILHY…FRFF, and LIAV…LLFY.

This sequence belongs to the XK family. Expressed predominantly, if not exclusively, in testis.

The protein localises to the cell membrane. The protein is XK-related protein 3 (XKR3) of Homo sapiens (Human).